Consider the following 442-residue polypeptide: 26S proteasome non-ATPase regulatory subunit 12 homolog B (442 aa).

Residues 1 to 129 (MEESRQLESS…KEEQGLIAEA (129 aa)) adopt a coiled-coil conformation. The 172-residue stretch at 232–403 (EICRSYKAIY…GIICFQIVKD (172 aa)) folds into the PCI domain.

This sequence belongs to the proteasome subunit p55 family. In terms of assembly, component of the 19S regulatory particle (RP/PA700) lid subcomplex of the 26S proteasome. The 26S proteasome is composed of a core protease (CP), known as the 20S proteasome, capped at one or both ends by the 19S regulatory particle (RP/PA700). The RP/PA700 complex is composed of at least 17 different subunits in two subcomplexes, the base and the lid, which form the portions proximal and distal to the 20S proteolytic core, respectively. As to expression, ubiquitous with highest expression in flowers.

The protein resides in the cytoplasm. It localises to the nucleus. Acts as a regulatory subunit of the 26 proteasome which is involved in the ATP-dependent degradation of ubiquitinated proteins. Acts redundantly with RPN5A. In Arabidopsis thaliana (Mouse-ear cress), this protein is 26S proteasome non-ATPase regulatory subunit 12 homolog B (RPN5B).